Reading from the N-terminus, the 436-residue chain is Phosphatidylinositol transfer protein CSR1 (436 aa).

The tract at residues 85–104 (VYDAEKVEDSDAEKEKPTPQ) is disordered. Residues 86 to 102 (YDAEKVEDSDAEKEKPT) show a composition bias toward basic and acidic residues. The CRAL-TRIO domain maps to 188–347 (KKGIVKQLEL…ELGGKDEYNF (160 aa)).

This sequence belongs to the PITP family. In terms of assembly, binds phosphatidylinositol (PtdIns).

The protein resides in the cytoplasm. Its subcellular location is the endosome. In terms of biological role, non-classical phosphatidylinositol (PtdIns) transfer protein (PITP), which exhibits PtdIns-binding/transfer activity in the absence of detectable PtdCho-binding/transfer activity. May also regulate post-Golgi membrane-trafficking events and have a role resistance to oxidative stress. In Eremothecium gossypii (strain ATCC 10895 / CBS 109.51 / FGSC 9923 / NRRL Y-1056) (Yeast), this protein is Phosphatidylinositol transfer protein CSR1 (CSR1).